A 236-amino-acid chain; its full sequence is Osmoprotectant import permease protein OsmY (236 aa).

6 helical membrane-spanning segments follow: residues 9–29, 47–67, 95–115, 126–146, 180–200, and 207–227; these read VLGF…GIGL, LMLV…SGIL, VLAL…VALF, TYAG…GIGM, PLAF…GIYL, and ILGA…LAWF. The ABC transmembrane type-1 domain occupies 43–224; sequence GQRHLMLVFT…LFALILDTLL (182 aa).

Belongs to the binding-protein-dependent transport system permease family. As to quaternary structure, the complex is composed of two ATP-binding proteins (OsmV), two transmembrane proteins (OsmW and OsmY) and a solute-binding protein (OsmX).

The protein resides in the cell inner membrane. Part of the OsmU ABC transporter complex, which is involved in the uptake of osmoprotectants such as choline-O-sulfate and glycine betaine. Probably responsible for the translocation of the substrate across the membrane. This is Osmoprotectant import permease protein OsmY (osmY) from Salmonella typhimurium (strain LT2 / SGSC1412 / ATCC 700720).